The following is an 801-amino-acid chain: Ent-copalyl diphosphate synthase, chloroplastic (801 aa).

Lys241 provides a ligand contact to substrate. Mg(2+)-binding residues include Asp373 and Asp375. A DXDD motif motif is present at residues 373-376; that stretch reads DIDD. Lys459 contacts substrate.

Belongs to the terpene synthase family. Mg(2+) is required as a cofactor.

The protein localises to the plastid. It localises to the chloroplast. It catalyses the reaction (2E,6E,10E)-geranylgeranyl diphosphate = ent-copalyl diphosphate. Its pathway is plant hormone biosynthesis; gibberellin biosynthesis. Catalyzes the conversion of geranylgeranyl diphosphate to the gibberellin precursor ent-copalyl diphosphate. This is Ent-copalyl diphosphate synthase, chloroplastic from Pisum sativum (Garden pea).